Consider the following 100-residue polypeptide: Small ribosomal subunit protein uS14c (100 aa).

This sequence belongs to the universal ribosomal protein uS14 family. In terms of assembly, part of the 30S ribosomal subunit.

The protein localises to the plastid. Its subcellular location is the chloroplast. Binds 16S rRNA, required for the assembly of 30S particles. This chain is Small ribosomal subunit protein uS14c, found in Cyanidioschyzon merolae (strain NIES-3377 / 10D) (Unicellular red alga).